Consider the following 704-residue polypeptide: Seven transmembrane domain-containing serine/threonine-protein kinase 2 (704 aa).

Over 1–5 (MPSKE) the chain is Extracellular. A helical membrane pass occupies residues 6–26 (FIIPLILLCFYSVNGFVAVIS). Topologically, residues 27–42 (SLVELFIHKASWNSIK) are cytoplasmic. Residues 43 to 63 (IFFYSLLILQCLCRCIIIGWG) form a helical membrane-spanning segment. Topologically, residues 64 to 76 (MIETVQGGEFYSN) are extracellular. Residues 77-97 (FPSLLFISYAGLVALQMIQFL) traverse the membrane as a helical segment. Residues 98-121 (PNDNQYLLLSEGKKNNHKVKVGTN) are Cytoplasmic-facing. A helical membrane pass occupies residues 122 to 142 (ILIFFNLFMYFGMFLLFGIAE). At 143-185 (KQVGNSTSFNHHGNHNSTTSTSTDEIPLVSTEVGELYLFGDKD) the chain is on the extracellular side. Asn-147 and Asn-158 each carry an N-linked (GlcNAc...) asparagine glycan. The chain crosses the membrane as a helical span at residues 186–206 (PIYIVLDCFYFVCLLLLLIFH). At 207–224 (SYVGWKTYKRNKDLFGIK) the chain is on the cytoplasmic side. A helical membrane pass occupies residues 225–245 (LNVIHLILLICIFIRSLLVII). Topologically, residues 246–265 (DPSSPNNSILHIDTESWLIY) are extracellular. A glycan (N-linked (GlcNAc...) asparagine) is linked at Asn-251. A helical transmembrane segment spans residues 266–286 (IYTISYYVVGEIIPGMLLIVI). Residues 287–704 (EFLLPYHKRK…WSIEKDSSSK (418 aa)) lie on the Cytoplasmic side of the membrane. The 366-residue stretch at 317-682 (IAIHELLGMG…SLGVKFHLAN (366 aa)) folds into the Protein kinase domain. ATP contacts are provided by residues 323 to 331 (LGMGGSGAM) and Lys-350. Asp-506 acts as the Proton acceptor in catalysis.

This sequence belongs to the protein kinase superfamily. Ser/Thr protein kinase family.

It localises to the membrane. The enzyme catalyses L-seryl-[protein] + ATP = O-phospho-L-seryl-[protein] + ADP + H(+). It carries out the reaction L-threonyl-[protein] + ATP = O-phospho-L-threonyl-[protein] + ADP + H(+). This chain is Seven transmembrane domain-containing serine/threonine-protein kinase 2 (7tmk2), found in Dictyostelium discoideum (Social amoeba).